The primary structure comprises 176 residues: Ribosome rescue factor SmrB (176 aa).

Residues 97–172 form the Smr domain; sequence LDMHGMTQQE…GDGALLVLLS (76 aa).

Belongs to the SmrB family. Associates with collided ribosomes, but not with correctly translating polysomes.

Functionally, acts as a ribosome collision sensor. Detects stalled/collided disomes (pairs of ribosomes where the leading ribosome is stalled and a second ribosome has collided with it) and endonucleolytically cleaves mRNA at the 5' boundary of the stalled ribosome. Stalled/collided disomes form a new interface (primarily via the 30S subunits) that binds SmrB. Cleaved mRNA becomes available for tmRNA ligation, leading to ribosomal subunit dissociation and rescue of stalled ribosomes. This is Ribosome rescue factor SmrB from Vibrio campbellii (strain ATCC BAA-1116).